The chain runs to 759 residues: Protein AKNAD1 (759 aa).

The disordered stretch occupies residues 169–246 (TDQLNPKKDG…HTEKASSGNR (78 aa)). Residues 181 to 192 (SNKPGSPTMTEE) show a composition bias toward polar residues. Residues 371 to 482 (QKISQGKQMC…EDVKDKVDES (112 aa)) are a coiled coil. Positions 484–496 (YTSAPSLPVSSPV) are enriched in polar residues. Disordered stretches follow at residues 484 to 543 (YTSA…QEAP), 634 to 654 (EKAP…FCSD), 678 to 723 (CRKE…PSLA), and 735 to 759 (PDTS…MKSQ). The segment covering 497-509 (TLDDLASTSSSLS) has biased composition (low complexity). Polar residues predominate over residues 639 to 654 (SDSTPNSDTGHSFCSD). Positions 679–688 (RKEPPKEFHY) are enriched in basic and acidic residues. Residues 735–744 (PDTSKSSPTP) show a composition bias toward polar residues.

This sequence belongs to the AKNA family.

This is Protein AKNAD1 (AKNAD1) from Macaca fascicularis (Crab-eating macaque).